The following is a 281-amino-acid chain: AT-hook motif nuclear-localized protein 20 (281 aa).

Disordered stretches follow at residues 43 to 85 (MNQS…APIF) and 216 to 247 (MEEE…DLSG). Residues 67-79 (RRPRGRPPGSKNK) constitute a DNA-binding region (a.T hook). A PPC domain is found at 91-229 (PNALRSHVLE…EDGGGSRQIH (139 aa)).

Its subcellular location is the nucleus. Its function is as follows. Transcription factor that specifically binds AT-rich DNA sequences related to the nuclear matrix attachment regions (MARs). Negatively regulates plant innate immunity (PTI) to pathogens through the down-regulation of the PAMP-triggered NHO1 and FRK1 expression. This Arabidopsis thaliana (Mouse-ear cress) protein is AT-hook motif nuclear-localized protein 20.